We begin with the raw amino-acid sequence, 295 residues long: Probable peptidyl-prolyl cis-trans isomerase B (295 aa).

2 disordered regions span residues 105–128 (SADKAAKPVKPPRAGKVPTDPATV) and 274–295 (IASGGDDGPPATEVTIESLRLD). The 169-residue stretch at 126 to 294 (ATVSASMATN…TEVTIESLRL (169 aa)) folds into the PPIase cyclophilin-type domain.

This sequence belongs to the cyclophilin-type PPIase family.

It carries out the reaction [protein]-peptidylproline (omega=180) = [protein]-peptidylproline (omega=0). Its function is as follows. PPIases accelerate the folding of proteins. It catalyzes the cis-trans isomerization of proline imidic peptide bonds in oligopeptides. The chain is Probable peptidyl-prolyl cis-trans isomerase B (ppiB) from Mycobacterium leprae (strain TN).